A 320-amino-acid chain; its full sequence is Aspartate carbamoyltransferase catalytic subunit (320 aa).

Positions 65 and 66 each coordinate carbamoyl phosphate. L-aspartate is bound at residue K93. R115, H143, and Q146 together coordinate carbamoyl phosphate. R176 and R230 together coordinate L-aspartate. G271 and P272 together coordinate carbamoyl phosphate.

Belongs to the aspartate/ornithine carbamoyltransferase superfamily. ATCase family. As to quaternary structure, heterododecamer (2C3:3R2) of six catalytic PyrB chains organized as two trimers (C3), and six regulatory PyrI chains organized as three dimers (R2).

It carries out the reaction carbamoyl phosphate + L-aspartate = N-carbamoyl-L-aspartate + phosphate + H(+). The protein operates within pyrimidine metabolism; UMP biosynthesis via de novo pathway; (S)-dihydroorotate from bicarbonate: step 2/3. Its function is as follows. Catalyzes the condensation of carbamoyl phosphate and aspartate to form carbamoyl aspartate and inorganic phosphate, the committed step in the de novo pyrimidine nucleotide biosynthesis pathway. This is Aspartate carbamoyltransferase catalytic subunit from Maricaulis maris (strain MCS10) (Caulobacter maris).